Here is a 464-residue protein sequence, read N- to C-terminus: Argininosuccinate lyase (464 aa).

Belongs to the lyase 1 family. Argininosuccinate lyase subfamily.

The protein resides in the cytoplasm. The catalysed reaction is 2-(N(omega)-L-arginino)succinate = fumarate + L-arginine. Its pathway is amino-acid biosynthesis; L-arginine biosynthesis; L-arginine from L-ornithine and carbamoyl phosphate: step 3/3. This Chlorobium phaeobacteroides (strain DSM 266 / SMG 266 / 2430) protein is Argininosuccinate lyase.